The primary structure comprises 596 residues: Arginine--tRNA ligase (596 aa).

Positions 128-138 (ANPTSSLHVGH) match the 'HIGH' region motif.

This sequence belongs to the class-I aminoacyl-tRNA synthetase family. As to quaternary structure, monomer.

It is found in the cytoplasm. The catalysed reaction is tRNA(Arg) + L-arginine + ATP = L-arginyl-tRNA(Arg) + AMP + diphosphate. In Acinetobacter baylyi (strain ATCC 33305 / BD413 / ADP1), this protein is Arginine--tRNA ligase.